Consider the following 185-residue polypeptide: Ribosome-recycling factor (185 aa).

It belongs to the RRF family.

It is found in the cytoplasm. Functionally, responsible for the release of ribosomes from messenger RNA at the termination of protein biosynthesis. May increase the efficiency of translation by recycling ribosomes from one round of translation to another. The protein is Ribosome-recycling factor of Chloroflexus aggregans (strain MD-66 / DSM 9485).